An 860-amino-acid polypeptide reads, in one-letter code: Alpha,alpha-trehalose-phosphate synthase [UDP-forming] 6 (860 aa).

Ser-5 bears the Phosphoserine mark. The glycosyltransferase stretch occupies residues 53-557 (DRIIIVANEL…ARSFLQDLER (505 aa)).

This sequence in the N-terminal section; belongs to the glycosyltransferase 20 family. The protein in the C-terminal section; belongs to the trehalose phosphatase family. As to quaternary structure, binds to the phosphopeptide-binding site of GRF/14-3-3. Phosphorylated. As to expression, expressed in seedlings, leaves, stems, flowers, siliques and roots.

The catalysed reaction is D-glucose 6-phosphate + UDP-alpha-D-glucose = alpha,alpha-trehalose 6-phosphate + UDP + H(+). In terms of biological role, regulates plant architecture, shape of epidermal pavement cells and branching of trichomes. The sequence is that of Alpha,alpha-trehalose-phosphate synthase [UDP-forming] 6 from Arabidopsis thaliana (Mouse-ear cress).